The sequence spans 809 residues: H(+)/Cl(-) exchange transporter 7 (809 aa).

Topologically, residues 1–130 (MANVSKKVSW…TAFRTVEIKR (130 aa)) are cytoplasmic. Ser-9 and Ser-64 each carry phosphoserine. A run of 2 helical transmembrane segments spans residues 131–163 (WVIC…YRLV) and 178–201 (FSLL…VAFI). The Selectivity filter part_1 signature appears at 207 to 211 (GSGIP). Ser-208 provides a ligand contact to chloride. The helical intramembrane region spans 210–217 (IPQIKCFL). 2 helical membrane passes run 227–245 (RLKT…VVGG) and 251–268 (EGPM…ISQG). Residues 249-253 (GKEGP) carry the Selectivity filter part_2 motif. Intramembrane regions (helical) lie at residues 292-304 (FVSA…VSAA) and 308-316 (PVGGVLFSL). 5 helical membrane passes run 326–345 (FLTW…LNFV), 379–409 (IPIF…FRIR), 414–436 (PCLQ…FVLI), 491–511 (PMTL…TYGL), and 516–539 (GVFI…LSYI). The Selectivity filter part_3 signature appears at 516–520 (GVFIP). Phe-518 serves as a coordination point for chloride. Residues 549–563 (GKYALMGAAAQLGGI) constitute an intramembrane region (helical). The note=Loop between two helices intramembrane region spans 564-566 (VRM). Residues 567–578 (TLSLTVIMMEAT) constitute an intramembrane region (helical). The segment at residues 579-582 (SSVT) is an intramembrane region (note=Loop between two helices). Residues 583-601 (YGFPIMLVLMTAKIVGDVF) form a helical membrane-spanning segment. Residues 602–809 (IEGLYDMHIQ…GLEELSLAQT (208 aa)) are Cytoplasmic-facing. Tyr-606 contributes to the chloride binding site. CBS domains follow at residues 635–699 (MSTP…VFVE) and 745–803 (MNPS…GLEE). ATP contacts are provided by residues 662-664 (HNG) and 787-790 (TRKD). Residue Ser-805 is modified to Phosphoserine.

This sequence belongs to the chloride channel (TC 2.A.49) family. ClC-7/CLCN7 subfamily. Chloride channel 7 are heteromers of alpha (CLCN7) and beta (OSTM1) subunits.

The protein localises to the lysosome membrane. It carries out the reaction 2 chloride(in) + H(+)(out) = 2 chloride(out) + H(+)(in). In terms of biological role, slowly voltage-gated channel mediating the exchange of chloride ions against protons. Functions as antiporter and contributes to the acidification of the lysosome lumen and may be involved in maintaining lysosomal pH. The CLC channel family contains both chloride channels and proton-coupled anion transporters that exchange chloride or another anion for protons. The presence of conserved gating glutamate residues is typical for family members that function as antiporters. The sequence is that of H(+)/Cl(-) exchange transporter 7 (CLCN7) from Bos taurus (Bovine).